The chain runs to 426 residues: AP-1 complex subunit mu-1 (426 aa).

Residues 167-425 (KNEVFLDVIE…TQNGTEYSIR (259 aa)) enclose the MHD domain.

It belongs to the adaptor complexes medium subunit family. As to quaternary structure, adaptor protein complex 1 (AP-1) is a heterotetramer composed of two large adaptins (gamma-type subunit apl4 and beta-type subunit apl2), a medium adaptin (mu-type subunit apm1) and a small adaptin (sigma-type subunit aps1). AP-1 interacts with clathrin. Interacts with sad1.

The protein resides in the cytoplasmic vesicle. Its subcellular location is the clathrin-coated vesicle membrane. It localises to the membrane. The protein localises to the clathrin-coated pit. Functionally, component of the adaptor complexes which link clathrin to receptors in coated vesicles. Clathrin-associated protein complexes are believed to interact with the cytoplasmic tails of membrane proteins, leading to their selection and concentration. The chain is AP-1 complex subunit mu-1 (apm1) from Schizosaccharomyces pombe (strain 972 / ATCC 24843) (Fission yeast).